A 503-amino-acid chain; its full sequence is ATP-dependent RNA helicase dbp3 (503 aa).

A compositionally biased stretch (basic and acidic residues) spans 1 to 25 (MAKRVQHEGGDYRPQKRSKNERNGE). The tract at residues 1–35 (MAKRVQHEGGDYRPQKRSKNERNGEGSKVSPSAEA) is disordered. Positions 104–112 (SFSSPTPIQ) match the Q motif motif. One can recognise a Helicase ATP-binding domain in the interval 116–292 (WPLLFAGRDV…ATFMTSAVTV (177 aa)). 129 to 136 (AETGSGKT) contributes to the ATP binding site. Positions 239-242 (DEAD) match the DEAD box motif. The Helicase C-terminal domain maps to 307 to 472 (RIKQVVEVVK…DVPDALLKFG (166 aa)).

The protein belongs to the DEAD box helicase family. DDX5/DBP2 subfamily.

The protein localises to the nucleus. Its subcellular location is the nucleolus. It catalyses the reaction ATP + H2O = ADP + phosphate + H(+). ATP-dependent RNA helicase required for 60S ribosomal subunit synthesis. Involved in efficient pre-rRNA processing, predominantly at site A3, which is necessary for the normal formation of 25S and 5.8S rRNAs. In Neosartorya fischeri (strain ATCC 1020 / DSM 3700 / CBS 544.65 / FGSC A1164 / JCM 1740 / NRRL 181 / WB 181) (Aspergillus fischerianus), this protein is ATP-dependent RNA helicase dbp3 (dbp3).